Consider the following 610-residue polypeptide: Menin (610 aa).

The segment at 214-390 (GVAERSWLYL…SLLEAGEERP (177 aa)) is interaction with FANCD2. The disordered stretch occupies residues 460 to 552 (REAEAAEAEE…SPPPEGPVLT (93 aa)). Basic and acidic residues predominate over residues 484–500 (RRESKPEEPPPPKKPAL). Ser487 and Ser543 each carry phosphoserine. Thr594 carries the post-translational modification Phosphothreonine.

In terms of assembly, component of the MLL-HCF complex, at least composed of KMT2A/MLL1, MEN1, ASH2L, RBBP5, DPY30, WDR5, HCFC1 and HCFC2. Component of the menin-associated histone methyltransferase complex, at least composed of KMT2B/MLL4, MEN1, ASH2L, RBBP5, DPY30 and WDR5. Interacts with POLR2B. Interacts with POLR2A phosphorylated at 'Ser-5', but not with the unphosphorylated, nor 'Ser-2' phosphorylated POLR2A forms. Interacts with FANCD2 and DBF4. Interacts with SMAD3, but not with SMAD2, nor SMAD4. Directly interacts with NFKB1, NFKB2 and RELA. Interacts with JUND (via MBM motif); inhibits the interaction of JUND with MAPK10 and the phosphorylation of JUND by MAP kinases MAPK8 and MAPK10. Interacts with KMT2A (via MBM motif). The KMT2A-MEN1 complex interacts with PSIP1 with a greater affinity as MEN1 enhances interaction of KMT2A with PSIP1. In terms of tissue distribution, widely expressed, including in the pituitary, brain, large intestine, spleen, kidney, adrenal gland, ovary, testis, thymus, lung, epididymis, bone marrow, pancreatic islets and placenta.

It is found in the nucleus. Essential component of a MLL/SET1 histone methyltransferase (HMT) complex, a complex that specifically methylates 'Lys-4' of histone H3 (H3K4). Functions as a transcriptional regulator. Binds to the TERT promoter and represses telomerase expression. Represses JUND-mediated transcriptional activation on AP1 sites, as well as that mediated by NFKB subunit RELA. Positively regulates HOXC8 and HOXC6 gene expression. May be involved in normal hematopoiesis through the activation of HOXA9 expression. May be involved in DNA repair. Plays a role in TGFB1-mediated inhibition of cell-proliferation, possibly regulating SMAD3 transcriptional activity. The protein is Menin (Men1) of Rattus norvegicus (Rat).